The primary structure comprises 519 residues: Cyclic AMP-responsive element-binding protein 3-like protein 1 (519 aa).

Residues 1–60 (MDAVLEPFPADRLFPGSSFLDLGDLNESDFLNNAHFPEHLDHFVENMEDFSNDLFSSFFD) form a required for transcription activation region. Over 1 to 376 (MDAVLEPFPA…MAATQTGTCL (376 aa)) the chain is Cytoplasmic. K184 is covalently cross-linked (Glycyl lysine isopeptide (Lys-Gly) (interchain with G-Cter in SUMO2)). Residues 200-259 (DLVQMPPTPPSSHGSDSDGSQSPRSLPPSSPVRPMARSSTAISTSPLLTAPHKLQGTSGP) are disordered. Residues 210 to 223 (SSHGSDSDGSQSPR) are compositionally biased toward low complexity. Positions 236–246 (RSSTAISTSPL) are enriched in polar residues. The bZIP domain occupies 290–353 (ALKRVRRKIK…RTLLQQLQKL (64 aa)). Residues 292–321 (KRVRRKIKNKISAQESRRKKKEYVECLEKK) form a basic motif region. The tract at residues 332-353 (LWKKVETLETANRTLLQQLQKL) is leucine-zipper. Residues 377-397 (MVAALCFVLVLGSLVPCLPAF) traverse the membrane as a helical; Signal-anchor for type II membrane protein segment. The S2P recognition motif lies at 392–395 (PCLP). Topologically, residues 398-519 (SSGSMTVKED…LGPNTTIKLS (122 aa)) are lumenal. An S1P recognition motif is present at residues 423–426 (RSLL). Residues 449–519 (EGWELKPGGP…LGPNTTIKLS (71 aa)) are disordered. Residues 462 to 486 (RPQDHLRHDRADSIHETTKYLRETW) are compositionally biased toward basic and acidic residues. N493, N498, and N513 each carry an N-linked (GlcNAc...) asparagine glycan.

Belongs to the bZIP family. ATF subfamily. In terms of assembly, interacts with SMAD4, the interaction takes place upon TGFB1 induction and SMAD4 acts as a CREB3L1 coactivator to induce the expression of genes involved in assembly of collagen extracellular matrix. N-glycosylated. Post-translationally, ubiquitinated by HRD1/SYVN1; undergoes 'Lys-48'-linked ubiquitination, followed by rapid proteasomal degradation under normal conditions. Upon ER stress, SYVN1 E3 ubiquitin-protein ligase dissociates from its substrate, ubiquitination does not occur and CREB3L1 is stabilized. In terms of processing, upon ER stress or DNA damage, translocated to the Golgi apparatus, where it is processed by regulated intramembrane proteolysis (RIP) to release the cytosol-facing N-terminal transcription factor domain. The cleavage is performed sequentially by site-1 and site-2 proteases (S1P/MBTPS1 and S2P/MBTPS2). RIP is induced by TGFB1 and ceramide. In terms of tissue distribution, expressed in cortical and trabecular bones. Highly expressed in osteoblasts, but not detected in osteoclasts, nor in macrophages. Expressed at relatively low levels in lung and kidney. Weakly expressed in brain and spleen. Expressed in astrocytes.

The protein resides in the endoplasmic reticulum membrane. It localises to the nucleus. Its function is as follows. Precursor of the transcription factor form (Processed cyclic AMP-responsive element-binding protein 3-like protein 1), which is embedded in the endoplasmic reticulum membrane with N-terminal DNA-binding and transcription activation domains oriented toward the cytosolic face of the membrane. In response to ER stress or DNA damage, transported to the Golgi, where it is cleaved in a site-specific manner by resident proteases S1P/MBTPS1 and S2P/MBTPS2. The released N-terminal cytosolic domain is translocated to the nucleus where it activates transcription of specific target genes involved in the cell-cycle progression inhibition. In terms of biological role, transcription factor involved in cell type specific DNA damage and unfolded protein response (UPR). Binds the DNA consensus sequence 5'-GTGXGCXGC-3'. Plays a critical role in bone formation through the transcription of COL1A1, and possibly COL1A2, and the secretion of bone matrix proteins. Directly binds to the UPR element (UPRE)-like sequence in an osteoblast-specific COL1A1 promoter region and induces its transcription. Does not regulate COL1A1 in other tissues, such as skin. Required to protect astrocytes from ER stress-induced cell death. In astrocytes, binds to the cAMP response element (CRE) of the BiP/HSPA5 promoter and participate in its transcriptional activation. In astrocytes and osteoblasts, upon DNA damage, inhibits cell-cycle progression after G2/M phase by binding to promoters and activating transcription of genes encoding cell-cycle inhibitors, such as p21/CDKN1A. Required for TGFB1 to activate genes involved in the assembly of collagen extracellular matrix. The polypeptide is Cyclic AMP-responsive element-binding protein 3-like protein 1 (Creb3l1) (Mus musculus (Mouse)).